Reading from the N-terminus, the 977-residue chain is Protein bicaudal C homolog 1 (977 aa).

A disordered region spans residues M1 to L43. S27, S32, and S45 each carry phosphoserine. KH domains follow at residues R134–I201 and P286–L350. K400 bears the N6-acetyllysine mark. Residues S590 to E621 are compositionally biased toward polar residues. Disordered regions lie at residues S590–G622, G667–R702, and E794–E848. Residues S614 and S681 each carry the phosphoserine modification. The span at L692 to R702 shows a compositional bias: basic and acidic residues. Residues E794 to S803 are compositionally biased toward low complexity. Residues F875–N938 enclose the SAM domain.

Belongs to the BicC family. Interacts (via KH domains) with ANKS6 (via SAM domain) in an RNA-dependent manner. Interacts with ANKS3. In the adult, predominantly expressed in heart and kidney. In 8 week old mice, expressed in growing primary oocytes and in the stromal cells of the theca.

It is found in the cytoplasm. Putative RNA-binding protein. May be involved in regulating gene expression during embryonic development. The protein is Protein bicaudal C homolog 1 (Bicc1) of Mus musculus (Mouse).